The sequence spans 329 residues: uncharacterized protein (329 aa).

The SIS domain maps to 37-180 (LAEKILGHSG…AMLLFHSRGV (144 aa)). Position 52 to 57 (52 to 57 (GVGKSG)) interacts with ATP. 2 CBS domains span residues 206–265 (MFPK…GGEV) and 274–329 (MTAN…AGLL).

The protein belongs to the SIS family. GutQ/KpsF subfamily.

This is an uncharacterized protein from Chlamydia pneumoniae (Chlamydophila pneumoniae).